A 290-amino-acid chain; its full sequence is MKRTALKIGYIGTNFHGFQRQPDLRTVEEELIYHLRKLGYIDDLKKSRFRIAGRTDAGVHSLGNVISFQSEKEVRVNEINNSLPDDIQILAKAPVRFGFKPRYAEMRQYRYVLFRSDLDLYKLNEVAEIFKGTHNFTNFTKRFQKTTTRTIDDIKITKANLNDYHKKEFPNLHDTLSPVFVDIYGESFLWNMVRKMMRVFVDVAIGKLSLEKVEELLNPAENDPRANIKVLDPDYLILMDIKYDGVKFVYDDYACERFKRNLVDSLGDLQRKYAIRESMIKSLEDLERIN.

Asp56 acts as the Nucleophile in catalysis. Residue Tyr109 participates in substrate binding.

The protein belongs to the tRNA pseudouridine synthase TruA family.

The enzyme catalyses uridine(38/39/40) in tRNA = pseudouridine(38/39/40) in tRNA. Its function is as follows. Formation of pseudouridine at positions 38, 39 and 40 in the anticodon stem and loop of transfer RNAs. The protein is tRNA pseudouridine synthase A of Methanobrevibacter smithii (strain ATCC 35061 / DSM 861 / OCM 144 / PS).